A 37-amino-acid chain; its full sequence is Cytochrome b6-f complex subunit 5 (37 aa).

Residues 5 to 25 (LLSGIVLGLIPITLFGLLVAA) form a helical membrane-spanning segment.

Belongs to the PetG family. In terms of assembly, the 4 large subunits of the cytochrome b6-f complex are cytochrome b6, subunit IV (17 kDa polypeptide, PetD), cytochrome f and the Rieske protein, while the 4 small subunits are PetG, PetL, PetM and PetN. The complex functions as a dimer.

It localises to the plastid. It is found in the chloroplast thylakoid membrane. Its function is as follows. Component of the cytochrome b6-f complex, which mediates electron transfer between photosystem II (PSII) and photosystem I (PSI), cyclic electron flow around PSI, and state transitions. PetG is required for either the stability or assembly of the cytochrome b6-f complex. The chain is Cytochrome b6-f complex subunit 5 from Pyropia yezoensis (Susabi-nori).